We begin with the raw amino-acid sequence, 199 residues long: 3-isopropylmalate dehydratase small subunit (199 aa).

This sequence belongs to the LeuD family. LeuD type 1 subfamily. Heterodimer of LeuC and LeuD.

The catalysed reaction is (2R,3S)-3-isopropylmalate = (2S)-2-isopropylmalate. It functions in the pathway amino-acid biosynthesis; L-leucine biosynthesis; L-leucine from 3-methyl-2-oxobutanoate: step 2/4. Catalyzes the isomerization between 2-isopropylmalate and 3-isopropylmalate, via the formation of 2-isopropylmaleate. The chain is 3-isopropylmalate dehydratase small subunit from Bacillus pumilus (strain SAFR-032).